Reading from the N-terminus, the 534-residue chain is CTP synthase (534 aa).

Residues 1 to 269 are amidoligase domain; that stretch reads MHVSNSKFIF…DKIIIDAFRL (269 aa). Ser17 lines the CTP pocket. Ser17 contacts UTP. 18 to 23 serves as a coordination point for ATP; sequence SLGKGV. Tyr58 provides a ligand contact to L-glutamine. Asp75 contacts ATP. Asp75 and Glu143 together coordinate Mg(2+). CTP-binding positions include 150–152, 190–195, and Lys226; these read DIE and KTKPTQ. UTP contacts are provided by residues 190 to 195 and Lys226; that span reads KTKPTQ. The region spanning 294–532 is the Glutamine amidotransferase type-1 domain; it reads DIAIVGKYIK…IENAYIYKKE (239 aa). Gly352 is an L-glutamine binding site. Cys379 functions as the Nucleophile; for glutamine hydrolysis in the catalytic mechanism. Residues 380 to 383, Glu403, and Arg460 each bind L-glutamine; that span reads LGMQ. Catalysis depends on residues His505 and Glu507.

It belongs to the CTP synthase family. As to quaternary structure, homotetramer.

The catalysed reaction is UTP + L-glutamine + ATP + H2O = CTP + L-glutamate + ADP + phosphate + 2 H(+). The enzyme catalyses L-glutamine + H2O = L-glutamate + NH4(+). It catalyses the reaction UTP + NH4(+) + ATP = CTP + ADP + phosphate + 2 H(+). The protein operates within pyrimidine metabolism; CTP biosynthesis via de novo pathway; CTP from UDP: step 2/2. Allosterically activated by GTP, when glutamine is the substrate; GTP has no effect on the reaction when ammonia is the substrate. The allosteric effector GTP functions by stabilizing the protein conformation that binds the tetrahedral intermediate(s) formed during glutamine hydrolysis. Inhibited by the product CTP, via allosteric rather than competitive inhibition. In terms of biological role, catalyzes the ATP-dependent amination of UTP to CTP with either L-glutamine or ammonia as the source of nitrogen. Regulates intracellular CTP levels through interactions with the four ribonucleotide triphosphates. This chain is CTP synthase, found in Hydrogenobaculum sp. (strain Y04AAS1).